Consider the following 351-residue polypeptide: MASKVQLVFLFLFLCAMWASPSAASRDEPNDPMMKRFEEWMAEYGRVYKDDDEKMRRFQIFKNNVKHIETFNSRNENSYTLGINQFTDMTKSEFVAQYTGVSLPLNIEREPVVSFDDVNISAVPQSIDWRDYGAVNEVKNQNPCGSCWSFAAIATVEGIYKIKTGYLVSLSEQEVLDCAVSYGCKGGWVNKAYDFIISNNGVTTEENYPYLAYQGTCNANSFPNSAYITGYSYVRRNDERSMMYAVSNQPIAALIDASENFQYYNGGVFSGPCGTSLNHAITIIGYGQDSSGTKYWIVRNSWGSSWGEGGYVRMARGVSSSSGVCGIAMAPLFPTLQSGANAEVIKMVSET.

The signal sequence occupies residues 1-24; it reads MASKVQLVFLFLFLCAMWASPSAA. The propeptide at 25 to 121 is activation peptide; the sequence is SRDEPNDPMM…VVSFDDVNIS (97 aa). N-linked (GlcNAc...) asparagine glycosylation is present at N119. 3 disulfide bridges follow: C144–C184, C178–C217, and C273–C325. C147 is a catalytic residue. Active-site residues include H279 and N300.

The protein belongs to the peptidase C1 family.

It carries out the reaction Hydrolysis of proteins with broad specificity for peptide bonds. Bz-Phe-Val-Arg-|-NHMec is a good synthetic substrate, but there is no action on Z-Arg-Arg-|-NHMec (cf. stem bromelain).. Functionally, cysteine proteinase with a high level of diversity in substrate specificity. The protein is Fruit bromelain of Ananas comosus (Pineapple).